We begin with the raw amino-acid sequence, 140 residues long: Transcription antitermination protein NusB (140 aa).

The protein belongs to the NusB family.

Its function is as follows. Involved in transcription antitermination. Required for transcription of ribosomal RNA (rRNA) genes. Binds specifically to the boxA antiterminator sequence of the ribosomal RNA (rrn) operons. In Pseudothermotoga lettingae (strain ATCC BAA-301 / DSM 14385 / NBRC 107922 / TMO) (Thermotoga lettingae), this protein is Transcription antitermination protein NusB.